We begin with the raw amino-acid sequence, 483 residues long: MIQVLLVTICLAVFPYQGSSIILESGNVNDYEVVYPRKVTALPKRAVQQKYEDAMQYELKVNGEPVVLHLEKNKGLFSEDYSETHYSPDGREITTYPSVEDHCYYHGRIHNDADSTASISACDGLKGYFKLQGETYLIEPLKLSDSEAHAVYKYENIEKEDEAPKMCGVTQNWESDESIKKASQLYLTPEQQRFPQRYIELAIVVDHGMYKKYNHDSDKIKVRVHQMVNHINEMYRPLNIAITLSLLQIWSNKDLITVKSASNVTLNLFGNWRETVLLKRRSHDCAHLLTDINFTGNIIGLAYKQGMCNPKLSVGLVQDYSSNVFVVAVIMTHELGHNLGMEHDEEKNGKKCNCKTCIMSPAISDPPAQLFSDCSKNDYHTFLTNRNPQCILNAPLRTDTVSTPVSGNEFLEAGEECDCGSPSNPCCDAATCKLRPGAQCADGLCCDQCRFKKKRTICRIARGDFPDDRCTGLSNDCPRWNDL.

Positions 1-20 are cleaved as a signal peptide; it reads MIQVLLVTICLAVFPYQGSS. Residues 21 to 190 constitute a propeptide that is removed on maturation; the sequence is IILESGNVND…KASQLYLTPE (170 aa). The region spanning 197 to 395 is the Peptidase M12B domain; sequence RYIELAIVVD…RNPQCILNAP (199 aa). Glutamate 200 contacts Ca(2+). N-linked (GlcNAc...) asparagine glycosylation occurs at asparagine 263. Residue aspartate 284 participates in Ca(2+) binding. Asparagine 293 carries an N-linked (GlcNAc...) asparagine glycan. Disulfide bonds link cysteine 308–cysteine 390, cysteine 352–cysteine 374, and cysteine 354–cysteine 357. Histidine 333 contributes to the Zn(2+) binding site. Glutamate 334 is an active-site residue. Residues histidine 337 and histidine 343 each contribute to the Zn(2+) site. Positions 390 and 393 each coordinate Ca(2+). A propeptide spanning residues 396–413 is cleaved from the precursor; sequence LRTDTVSTPVSGNEFLEA. The 81-residue stretch at 403 to 483 folds into the Disintegrin domain; the sequence is TPVSGNEFLE…SNDCPRWNDL (81 aa). Intrachain disulfides connect cysteine 417–cysteine 432, cysteine 419–cysteine 427, cysteine 426–cysteine 449, cysteine 440–cysteine 446, cysteine 445–cysteine 470, and cysteine 458–cysteine 477. Residues 462–464 carry the Cell attachment site motif; that stretch reads RGD.

The protein belongs to the venom metalloproteinase (M12B) family. P-II subfamily. P-IIa sub-subfamily. As to quaternary structure, monomeric (disintegrin). The cofactor is Zn(2+). In terms of tissue distribution, expressed by the venom gland.

The protein resides in the secreted. Functionally, impairs hemostasis in the envenomed animal. In terms of biological role, inhibits platelet aggregation induced by ADP, thrombin, platelet-activating factor and collagen. Acts by inhibiting fibrinogen interaction with platelet receptors GPIIb/GPIIIa (ITGA2B/ITGB3). The sequence is that of Zinc metalloproteinase/disintegrin from Protobothrops flavoviridis (Habu).